The chain runs to 330 residues: Methionyl-tRNA formyltransferase (330 aa).

(6S)-5,6,7,8-tetrahydrofolate is bound at residue 121–124 (SLLP).

This sequence belongs to the Fmt family.

It catalyses the reaction L-methionyl-tRNA(fMet) + (6R)-10-formyltetrahydrofolate = N-formyl-L-methionyl-tRNA(fMet) + (6S)-5,6,7,8-tetrahydrofolate + H(+). Attaches a formyl group to the free amino group of methionyl-tRNA(fMet). The formyl group appears to play a dual role in the initiator identity of N-formylmethionyl-tRNA by promoting its recognition by IF2 and preventing the misappropriation of this tRNA by the elongation apparatus. The chain is Methionyl-tRNA formyltransferase from Burkholderia cenocepacia (strain HI2424).